Here is a 201-residue protein sequence, read N- to C-terminus: MRLYLASRSPRRRELLNQIGIDFDTVVFRDGMRADSETDETPLPGEKPVAYVERVARAKAIHGLKIVEERKLPMRPVLSADTTLEFNGEIIGKPVDRADAAAILRRLSGQTHRVLTGVAINHMGHTEYVLSSSEVTFREIDDEEIRHYVMSGEPMDKAGAYGIQGRAGLFVKHLAGSFTGVMGLPVCETGELLKRLGFRPL.

Catalysis depends on Asp81, which acts as the Proton acceptor.

Belongs to the Maf family. YhdE subfamily. A divalent metal cation is required as a cofactor.

It is found in the cytoplasm. The catalysed reaction is dTTP + H2O = dTMP + diphosphate + H(+). It carries out the reaction UTP + H2O = UMP + diphosphate + H(+). Functionally, nucleoside triphosphate pyrophosphatase that hydrolyzes dTTP and UTP. May have a dual role in cell division arrest and in preventing the incorporation of modified nucleotides into cellular nucleic acids. This Dechloromonas aromatica (strain RCB) protein is dTTP/UTP pyrophosphatase.